We begin with the raw amino-acid sequence, 84 residues long: Small ribosomal subunit protein uS17 (84 aa).

It belongs to the universal ribosomal protein uS17 family. In terms of assembly, part of the 30S ribosomal subunit.

Functionally, one of the primary rRNA binding proteins, it binds specifically to the 5'-end of 16S ribosomal RNA. The protein is Small ribosomal subunit protein uS17 of Aliivibrio fischeri (strain ATCC 700601 / ES114) (Vibrio fischeri).